The chain runs to 428 residues: Putative zinc metalloprotease SAS1196 (428 aa).

His-21 is a binding site for Zn(2+). Residue Glu-22 is part of the active site. A Zn(2+)-binding site is contributed by His-25. Transmembrane regions (helical) follow at residues Phe-172–Ala-194, Gly-309–Phe-331, Ile-352–Ile-374, and Thr-401–Trp-420. The PDZ domain occupies Ala-186 to Lys-269.

Belongs to the peptidase M50B family. Requires Zn(2+) as cofactor.

It is found in the cell membrane. This Staphylococcus aureus (strain MSSA476) protein is Putative zinc metalloprotease SAS1196.